Consider the following 506-residue polypeptide: MKMLNSRKIRMERRIVGATNRWRFPQDHFCGDLLALSQMCNVLNVDLDDALKNPDKLCISKFQKLFTESIMDSGTQSGEADVILDCLGFKWELHHPQIFQSETLAKLYLTALIQNTKSSQRDLEKILKVHSTERMKKRSPVKKIIISLRINDPAVTRVAFALALKNLYMNEVEMTVDNVLGVLASAHILQFNRLFRKCVSTMLNRLTPCTIKNFYLAGCKYKEEQLTNACEKWLAMNLVPLVGTQIHLRHIPEPLLYKVLKSPRLFTFSEFHLLKTLLMWVYLQMNGKVQTLPIHETMLAFFSSFPKKSCFLEQDPGHSWMPLFLCLRLHGITSGKDLEEIKHINFFPESWLVRVTANHYHALESGGNMVHLKDLSTQAMRFGLLFRQEYTTYSETISIYGYFFEIKGIKHDTTSYSFSMQRIRHTDLECPSSVCEHSTISLRSERLVKYEIRAQTLVDGRWQEFGTNQIMQKFGFIKPGCKSHALKIQTVGIPIYASFAFIFPAS.

Residues 150 to 206 form the BTB domain; sequence INDPAVTRVAFALALKNLYMNEVEMTVDNVLGVLASAHILQFNRLFRKCVSTMLNRL.

The chain is BTB/POZ domain-containing protein 16 (Btbd16) from Rattus norvegicus (Rat).